Here is a 114-residue protein sequence, read N- to C-terminus: Dolichyl-diphosphooligosaccharide--protein glycosyltransferase subunit DAD1 (114 aa).

Residues 1-30 (MPKAAGDAKLLIQSLNKAYAATPTNLKIID) lie on the Cytoplasmic side of the membrane. Residues 31 to 51 (LYVVFAVVTALLQVVYMGIVG) form a helical membrane-spanning segment. A topological domain (lumenal) is located at residue serine 52. Residues 53-73 (FPFNSFLSGVLSCIGTAVLAV) traverse the membrane as a helical segment. The Cytoplasmic segment spans residues 74–93 (CHRIQVNKDNKEFKDLAPER). Residues 94–114 (AFADFVLCSLVLHLVIMNFLG) form a helical membrane-spanning segment.

This sequence belongs to the DAD/OST2 family. Component of the oligosaccharyltransferase (OST) complex.

Its subcellular location is the endoplasmic reticulum membrane. The protein operates within protein modification; protein glycosylation. Functionally, subunit of the oligosaccharyl transferase (OST) complex that catalyzes the initial transfer of a defined glycan (Glc(3)Man(9)GlcNAc(2) in eukaryotes) from the lipid carrier dolichol-pyrophosphate to an asparagine residue within an Asn-X-Ser/Thr consensus motif in nascent polypeptide chains, the first step in protein N-glycosylation. N-glycosylation occurs cotranslationally and the complex associates with the Sec61 complex at the channel-forming translocon complex that mediates protein translocation across the endoplasmic reticulum (ER). All subunits are required for a maximal enzyme activity. This Hordeum vulgare (Barley) protein is Dolichyl-diphosphooligosaccharide--protein glycosyltransferase subunit DAD1 (DAD1).